Here is a 432-residue protein sequence, read N- to C-terminus: 3-phosphoshikimate 1-carboxyvinyltransferase (432 aa).

Positions 22, 23, and 27 each coordinate 3-phosphoshikimate. Lysine 22 contacts phosphoenolpyruvate. Phosphoenolpyruvate contacts are provided by glycine 96 and arginine 127. 3-phosphoshikimate contacts are provided by serine 173, serine 174, glutamine 175, serine 201, aspartate 316, asparagine 339, and lysine 343. Glutamine 175 is a phosphoenolpyruvate binding site. Residue aspartate 316 is the Proton acceptor of the active site. Residues arginine 347, arginine 391, and lysine 416 each contribute to the phosphoenolpyruvate site.

The protein belongs to the EPSP synthase family. As to quaternary structure, monomer.

It is found in the cytoplasm. The enzyme catalyses 3-phosphoshikimate + phosphoenolpyruvate = 5-O-(1-carboxyvinyl)-3-phosphoshikimate + phosphate. It functions in the pathway metabolic intermediate biosynthesis; chorismate biosynthesis; chorismate from D-erythrose 4-phosphate and phosphoenolpyruvate: step 6/7. Its function is as follows. Catalyzes the transfer of the enolpyruvyl moiety of phosphoenolpyruvate (PEP) to the 5-hydroxyl of shikimate-3-phosphate (S3P) to produce enolpyruvyl shikimate-3-phosphate and inorganic phosphate. The chain is 3-phosphoshikimate 1-carboxyvinyltransferase from Histophilus somni (strain 2336) (Haemophilus somnus).